The chain runs to 452 residues: Proline--tRNA ligase (452 aa).

Belongs to the class-II aminoacyl-tRNA synthetase family. ProS type 2 subfamily. In terms of assembly, homodimer.

It localises to the cytoplasm. The catalysed reaction is tRNA(Pro) + L-proline + ATP = L-prolyl-tRNA(Pro) + AMP + diphosphate. In terms of biological role, catalyzes the attachment of proline to tRNA(Pro) in a two-step reaction: proline is first activated by ATP to form Pro-AMP and then transferred to the acceptor end of tRNA(Pro). The protein is Proline--tRNA ligase of Jannaschia sp. (strain CCS1).